Here is a 334-residue protein sequence, read N- to C-terminus: Protein-methionine-sulfoxide reductase catalytic subunit MsrP (334 aa).

Residues 1–44 (MKKNQFLKESDVTAESVFFMKRRQVLKALGISAAALSLPHAAHA) constitute a signal peptide (tat-type signal). Residues Asn-88, 91–92 (YE), Cys-146, Thr-181, Asn-233, Arg-238, and 249–251 (GIK) each bind Mo-molybdopterin.

The protein belongs to the MsrP family. As to quaternary structure, heterodimer of a catalytic subunit (MsrP) and a heme-binding subunit (MsrQ). Mo-molybdopterin is required as a cofactor. Predicted to be exported by the Tat system. The position of the signal peptide cleavage has not been experimentally proven.

The protein resides in the periplasm. The enzyme catalyses L-methionyl-[protein] + a quinone + H2O = L-methionyl-(S)-S-oxide-[protein] + a quinol. It carries out the reaction L-methionyl-[protein] + a quinone + H2O = L-methionyl-(R)-S-oxide-[protein] + a quinol. Its function is as follows. Part of the MsrPQ system that repairs oxidized periplasmic proteins containing methionine sulfoxide residues (Met-O), using respiratory chain electrons. Thus protects these proteins from oxidative-stress damage caused by reactive species of oxygen and chlorine generated by the host defense mechanisms. MsrPQ is essential for the maintenance of envelope integrity under bleach stress, rescuing a wide series of structurally unrelated periplasmic proteins from methionine oxidation, including the primary periplasmic chaperone SurA and the lipoprotein Pal. The catalytic subunit MsrP is non-stereospecific, being able to reduce both (R-) and (S-) diastereoisomers of methionine sulfoxide. This chain is Protein-methionine-sulfoxide reductase catalytic subunit MsrP, found in Escherichia coli O81 (strain ED1a).